Reading from the N-terminus, the 87-residue chain is Small ribosomal subunit protein uS19 (87 aa).

The disordered stretch occupies residues 1–29 (MARSLKKGPFVDHHLQKKVDVQNKEGTKK). Basic and acidic residues predominate over residues 9-28 (PFVDHHLQKKVDVQNKEGTK).

It belongs to the universal ribosomal protein uS19 family.

In terms of biological role, protein S19 forms a complex with S13 that binds strongly to the 16S ribosomal RNA. In Protochlamydia amoebophila (strain UWE25), this protein is Small ribosomal subunit protein uS19.